Reading from the N-terminus, the 23-residue chain is Paralytic peptide 2 (23 aa).

Cys7 and Cys19 are joined by a disulfide.

Belongs to the GBP/PSP1/paralytic peptide family. Hemolymph.

In terms of biological role, causes rapid, rigid paralysis when injected into Lepidopteran larvae. The physiological role may be to reduce hemolymph loss following injury and promote wound healing. The polypeptide is Paralytic peptide 2 (Manduca sexta (Tobacco hawkmoth)).